The chain runs to 362 residues: Lipoprotein p35 (362 aa).

The signal sequence occupies residues 1-30; that stretch reads MKIKKIKLLKALALTGAFGIVATVPVIVSS. Cys31 carries the N-palmitoyl cysteine lipid modification. Residue Cys31 is the site of S-diacylglycerol cysteine attachment. The interval 33 to 53 is disordered; it reads STSENNGNGNGNGGTDGNTQQ.

The protein belongs to the p35 lipoprotein family. Post-translationally, the N-terminus is blocked.

The protein resides in the cell membrane. Major M.penetrans antigen. The chain is Lipoprotein p35 from Malacoplasma penetrans (Mycoplasma penetrans).